The sequence spans 182 residues: Peptidyl-tRNA hydrolase (182 aa).

Tyr-14 is a tRNA binding site. His-19 functions as the Proton acceptor in the catalytic mechanism. Residues Phe-64, Asn-66, and Asn-112 each coordinate tRNA.

The protein belongs to the PTH family. In terms of assembly, monomer.

The protein localises to the cytoplasm. The catalysed reaction is an N-acyl-L-alpha-aminoacyl-tRNA + H2O = an N-acyl-L-amino acid + a tRNA + H(+). Functionally, hydrolyzes ribosome-free peptidyl-tRNAs (with 1 or more amino acids incorporated), which drop off the ribosome during protein synthesis, or as a result of ribosome stalling. Catalyzes the release of premature peptidyl moieties from peptidyl-tRNA molecules trapped in stalled 50S ribosomal subunits, and thus maintains levels of free tRNAs and 50S ribosomes. The polypeptide is Peptidyl-tRNA hydrolase (Wolbachia sp. subsp. Brugia malayi (strain TRS)).